A 291-amino-acid polypeptide reads, in one-letter code: Nucleotide-binding protein lwe2422 (291 aa).

Gly-13 to Thr-20 serves as a coordination point for ATP. Residue Asp-63 to Gly-66 participates in GTP binding.

This sequence belongs to the RapZ-like family.

Functionally, displays ATPase and GTPase activities. The chain is Nucleotide-binding protein lwe2422 from Listeria welshimeri serovar 6b (strain ATCC 35897 / DSM 20650 / CCUG 15529 / CIP 8149 / NCTC 11857 / SLCC 5334 / V8).